A 221-amino-acid chain; its full sequence is Probable GTP-binding protein EngB (221 aa).

One can recognise an EngB-type G domain in the interval 32 to 205 (GIPQIAFAGR…RKIVDSLITT (174 aa)). Residues 40 to 47 (GRSNAGKS), 67 to 71 (GKTKL), 85 to 88 (DLPG), 152 to 155 (TKID), and 184 to 186 (VSN) contribute to the GTP site. 2 residues coordinate Mg(2+): S47 and T69.

The protein belongs to the TRAFAC class TrmE-Era-EngA-EngB-Septin-like GTPase superfamily. EngB GTPase family. It depends on Mg(2+) as a cofactor.

Its function is as follows. Necessary for normal cell division and for the maintenance of normal septation. The protein is Probable GTP-binding protein EngB of Leptospira borgpetersenii serovar Hardjo-bovis (strain JB197).